The primary structure comprises 303 residues: Small ribosomal subunit protein uS2 (303 aa).

Residues 267–303 (AESLSMAEEPAPPSQRKGPASETAEPVAEPAVTESGS) form a disordered region.

The protein belongs to the universal ribosomal protein uS2 family.

The polypeptide is Small ribosomal subunit protein uS2 (Solibacter usitatus (strain Ellin6076)).